Consider the following 77-residue polypeptide: Acyl carrier protein (77 aa).

The Carrier domain maps to 1 to 76 (MAVFDEVKDV…DVVNYIDGLK (76 aa)). An O-(pantetheine 4'-phosphoryl)serine modification is found at Ser36.

It belongs to the acyl carrier protein (ACP) family. In terms of processing, 4'-phosphopantetheine is transferred from CoA to a specific serine of apo-ACP by AcpS. This modification is essential for activity because fatty acids are bound in thioester linkage to the sulfhydryl of the prosthetic group.

The protein resides in the cytoplasm. It participates in lipid metabolism; fatty acid biosynthesis. Its function is as follows. Carrier of the growing fatty acid chain in fatty acid biosynthesis. This Campylobacter fetus subsp. fetus (strain 82-40) protein is Acyl carrier protein.